Consider the following 206-residue polypeptide: Proteasome subunit beta 1 (206 aa).

Residues 1–14 (MSRIHNDPKVLLTG) constitute a propeptide, removed in mature form; by autocatalysis. Threonine 15 (nucleophile) is an active-site residue.

This sequence belongs to the peptidase T1B family. As to quaternary structure, the 20S proteasome core is composed of 14 alpha and 14 beta subunits that assemble into four stacked heptameric rings, resulting in a barrel-shaped structure. The two inner rings, each composed of seven catalytic beta subunits, are sandwiched by two outer rings, each composed of seven alpha subunits. The catalytic chamber with the active sites is on the inside of the barrel. Has a gated structure, the ends of the cylinder being occluded by the N-termini of the alpha-subunits. Is capped at one or both ends by the proteasome regulatory ATPase, PAN.

It localises to the cytoplasm. It carries out the reaction Cleavage of peptide bonds with very broad specificity.. Its activity is regulated as follows. The formation of the proteasomal ATPase PAN-20S proteasome complex, via the docking of the C-termini of PAN into the intersubunit pockets in the alpha-rings, triggers opening of the gate for substrate entry. Interconversion between the open-gate and close-gate conformations leads to a dynamic regulation of the 20S proteasome proteolysis activity. In terms of biological role, component of the proteasome core, a large protease complex with broad specificity involved in protein degradation. In Caldivirga maquilingensis (strain ATCC 700844 / DSM 13496 / JCM 10307 / IC-167), this protein is Proteasome subunit beta 1.